We begin with the raw amino-acid sequence, 95 residues long: FMRFamide-like neuropeptides 16 (95 aa).

The first 24 residues, 1 to 24 (MSLSGFEFSSIIAVLLLLIQLSSA), serve as a signal peptide directing secretion. A propeptide spanning residues 25 to 58 (AVLPVDYASQYGVASADEMTALPEEGSLFAERPA) is cleaved from the precursor. Phenylalanine amide occurs at positions 67, 77, and 87. The propeptide occupies 90–95 (SAPFEQ).

The protein belongs to the FARP (FMRFamide related peptide) family.

It localises to the secreted. Its function is as follows. FMRFamides and FMRFamide-like peptides are neuropeptides. AQTFVRF-amide inhibits the activity of dissected pharyngeal myogenic muscle system. This is FMRFamide-like neuropeptides 16 (flp-16) from Caenorhabditis briggsae.